A 102-amino-acid chain; its full sequence is Putative UPF0320 protein YMR326C (102 aa).

The protein belongs to the UPF0320 family.

This is Putative UPF0320 protein YMR326C from Saccharomyces cerevisiae (strain ATCC 204508 / S288c) (Baker's yeast).